Here is a 798-residue protein sequence, read N- to C-terminus: MGKKRIYELAKEMNKASKDVVDKAHQLGMDVKNHMGAISSEQETKLRQAFGGGSTVNTQSKATNNQKQQTTQNKPANKKPMNNKPGEQRNNQNRPNNQSTNGQQRNNNNQNRHGQSNTQNRSNQTNTNNQNRNTQNNNGSTTNQNRTSQNNNGGNNQNRGGQNRNNNFGGGQNRNNRNNFNNQNRNRFNKKGKKGKHQQESAKPAVPARKFRELPDVLEYTEGMNVADIAKKIHREPAEIIKKLFMMGVMVNQNQALDKDTIELLAVDYGMEPQEKVQVDIADIDKFFEPEAVVEENLTTRPPVVTIMGHVDHGKTTLLDTLRHSRVTSGEAGGITQHIGAYQLDIDGKPITFLDTPGHAAFTSMRARGASITDITILVVAADDGVMPQTIEAINHAKAAKVPIIVAVNKIDKPGANPDHVKQELSEHELIPEEWGGDTIFVNISAKFNQNIDELLENILLIAEVEDLKADPTQKAIGTVIEARLDKGKGPVATLLVQQGTLHVGDPIVVGNTYGRVRVMTNDMGRRDKEAGPATPVEITGLNDVPQAGDRFVVFEDEKTARQAGEERAKRALLEQRSASSRVTLDNLFESLKEGELKEVNIIVKADVQGSAEAVSASLQKIDVEGVRVKIVHAAVGAINESDVTLAAASNAIIIGFNVRPTPQAKQQAEQEEVDIRLHRIIYKALEEIETAMKGLLDPEFEEKITGQMTVRELYKVSKVGTIAGCYVTEGFIRRDSGVRVIRDGIVIYEGKLASLKRFKDDVKEVKLGFECGAMIENFNDLRVDDAIEGFIMEEIKQ.

The disordered stretch occupies residues 40 to 207 (SEQETKLRQA…QQESAKPAVP (168 aa)). A compositionally biased stretch (low complexity) spans 57–186 (NTQSKATNNQ…RNNFNNQNRN (130 aa)). The span at 187–196 (RFNKKGKKGK) shows a compositional bias: basic residues. Positions 300 to 469 (TRPPVVTIMG…LLIAEVEDLK (170 aa)) constitute a tr-type G domain. The segment at 309 to 316 (GHVDHGKT) is G1. GTP is bound at residue 309–316 (GHVDHGKT). The segment at 334-338 (GITQH) is G2. Positions 355–358 (DTPG) are G3. Residues 355–359 (DTPGH) and 409–412 (NKID) each bind GTP. The tract at residues 409 to 412 (NKID) is G4. Residues 445-447 (SAK) form a G5 region.

This sequence belongs to the TRAFAC class translation factor GTPase superfamily. Classic translation factor GTPase family. IF-2 subfamily.

It localises to the cytoplasm. Functionally, one of the essential components for the initiation of protein synthesis. Protects formylmethionyl-tRNA from spontaneous hydrolysis and promotes its binding to the 30S ribosomal subunits. Also involved in the hydrolysis of GTP during the formation of the 70S ribosomal complex. This Enterococcus faecalis (strain ATCC 700802 / V583) protein is Translation initiation factor IF-2.